Here is a 198-residue protein sequence, read N- to C-terminus: Superoxide dismutase [Mn], mitochondrial (198 aa).

Mn(2+) is bound at residue histidine 26. At tyrosine 34 the chain carries 3'-nitrotyrosine. 2 positions are modified to N6-acetyllysine; alternate: lysine 44 and lysine 51. 2 positions are modified to N6-succinyllysine; alternate: lysine 44 and lysine 51. Residue histidine 74 coordinates Mn(2+). Residue lysine 90 is modified to N6-acetyllysine. 2 positions are modified to N6-acetyllysine; alternate: lysine 98 and lysine 106. N6-succinyllysine; alternate is present on residues lysine 98 and lysine 106. Mn(2+)-binding residues include aspartate 159 and histidine 163. Lysine 178 bears the N6-acetyllysine mark.

The protein belongs to the iron/manganese superoxide dismutase family. Homotetramer. The cofactor is Mn(2+). Nitrated under oxidative stress. Nitration coupled with oxidation inhibits the catalytic activity. Post-translationally, acetylation at Lys-98 decreases enzymatic activity. Deacetylated by SIRT3 upon exposure to ionizing radiations or after long fasting. In terms of processing, polyubiquitinated; leading to proteasomal degradation. Deubiquitinated by USP36 which increases protein stability.

It is found in the mitochondrion matrix. The enzyme catalyses 2 superoxide + 2 H(+) = H2O2 + O2. Its function is as follows. Destroys superoxide anion radicals which are normally produced within the cells and which are toxic to biological systems. The polypeptide is Superoxide dismutase [Mn], mitochondrial (SOD2) (Callithrix jacchus (White-tufted-ear marmoset)).